A 221-amino-acid polypeptide reads, in one-letter code: Sperm acrosome membrane-associated protein 3 (221 aa).

Residues 1 to 69 (MGICMSMYTQ…EARSRAPRRQ (69 aa)) lie on the Cytoplasmic side of the membrane. The helical; Signal-anchor for type II membrane protein transmembrane segment at 70 to 90 (LCPPGITWLALAYLLSCLLAS) threads the bilayer. The Extracellular segment spans residues 91 to 221 (SKAKVFSRCE…LSDWVDGCDF (131 aa)). Residues 94 to 221 (KVFSRCELAK…LSDWVDGCDF (128 aa)) enclose the C-type lysozyme domain. 4 disulfides stabilise this stretch: Cys-99–Cys-219, Cys-123–Cys-207, Cys-157–Cys-172, and Cys-168–Cys-186.

Belongs to the glycosyl hydrolase 22 family. Interacts with ASTL. The processed form is expressed in sperm (at protein level). Expressed strongly in testis and epididymis and weakly in pancreas.

The protein localises to the cytoplasmic vesicle. It localises to the secretory vesicle. It is found in the acrosome membrane. The protein resides in the secreted. In terms of biological role, sperm surface membrane protein that may be involved in sperm-egg plasma membrane adhesion and fusion during fertilization. It could be a potential receptor for the egg oligosaccharide residue N-acetylglucosamine, which is present in the extracellular matrix over the egg plasma membrane. The processed form has no detectable bacteriolytic activity in vitro. The protein is Sperm acrosome membrane-associated protein 3 (Spaca3) of Mus musculus (Mouse).